Consider the following 125-residue polypeptide: Ribosome-binding factor A (125 aa).

Belongs to the RbfA family. Monomer. Binds 30S ribosomal subunits, but not 50S ribosomal subunits or 70S ribosomes.

The protein localises to the cytoplasm. In terms of biological role, one of several proteins that assist in the late maturation steps of the functional core of the 30S ribosomal subunit. Associates with free 30S ribosomal subunits (but not with 30S subunits that are part of 70S ribosomes or polysomes). Required for efficient processing of 16S rRNA. May interact with the 5'-terminal helix region of 16S rRNA. In Wigglesworthia glossinidia brevipalpis, this protein is Ribosome-binding factor A.